The primary structure comprises 418 residues: Acyl-[acyl-carrier-protein] desaturase 4, chloroplastic (418 aa).

The N-terminal 70 residues, 1–70 (MASSGLAVAA…ATAAAPADTA (70 aa)), are a transit peptide targeting the chloroplast. 6 residues coordinate Fe cation: E152, E190, H193, E243, E276, and H279.

It belongs to the fatty acid desaturase type 2 family. Homodimer. The cofactor is Fe(2+).

Its subcellular location is the plastid. It localises to the chloroplast. The protein operates within lipid metabolism; fatty acid metabolism. Functionally, introduces a cis double bond in the acyl chain of an acyl-[acyl-carrier protein]. The sequence is that of Acyl-[acyl-carrier-protein] desaturase 4, chloroplastic from Oryza sativa subsp. japonica (Rice).